An 89-amino-acid polypeptide reads, in one-letter code: U-scoloptoxin(12)-Er1a (89 aa).

Residues 1-22 (MKGLFLVVFLMWFVSQMNTEET) form the signal peptide.

The protein belongs to the scoloptoxin-12 family. Post-translationally, contains 3 disulfide bonds. In terms of tissue distribution, expressed by the venom gland.

Its subcellular location is the secreted. The chain is U-scoloptoxin(12)-Er1a from Ethmostigmus rubripes (Giant centipede).